A 94-amino-acid chain; its full sequence is Pyrimidine/purine nucleoside phosphorylase (94 aa).

It belongs to the nucleoside phosphorylase PpnP family.

The enzyme catalyses a purine D-ribonucleoside + phosphate = a purine nucleobase + alpha-D-ribose 1-phosphate. It carries out the reaction adenosine + phosphate = alpha-D-ribose 1-phosphate + adenine. It catalyses the reaction cytidine + phosphate = cytosine + alpha-D-ribose 1-phosphate. The catalysed reaction is guanosine + phosphate = alpha-D-ribose 1-phosphate + guanine. The enzyme catalyses inosine + phosphate = alpha-D-ribose 1-phosphate + hypoxanthine. It carries out the reaction thymidine + phosphate = 2-deoxy-alpha-D-ribose 1-phosphate + thymine. It catalyses the reaction uridine + phosphate = alpha-D-ribose 1-phosphate + uracil. The catalysed reaction is xanthosine + phosphate = alpha-D-ribose 1-phosphate + xanthine. Catalyzes the phosphorolysis of diverse nucleosides, yielding D-ribose 1-phosphate and the respective free bases. Can use uridine, adenosine, guanosine, cytidine, thymidine, inosine and xanthosine as substrates. Also catalyzes the reverse reactions. In Pectobacterium atrosepticum (strain SCRI 1043 / ATCC BAA-672) (Erwinia carotovora subsp. atroseptica), this protein is Pyrimidine/purine nucleoside phosphorylase.